The following is a 373-amino-acid chain: mRNA export factor rae-1 (373 aa).

Met-1 carries the N-acetylmethionine modification. WD repeat units lie at residues 40–82, 87–126, 128–169, and 276–315; these read APED…TFEG, NIPA…VAVV, THDG…NQTQ, and QEIY…KLKT.

It belongs to the WD repeat rae1 family. In terms of assembly, the nuclear pore complex (NPC) constitutes the exclusive means of nucleocytoplasmic transport. NPCs allow the passive diffusion of ions and small molecules and the active, nuclear transport receptor-mediated bidirectional transport of macromolecules such as proteins, RNAs, ribonucleoparticles (RNPs), and ribosomal subunits across the nuclear envelope. Interacts with rpm-1. Expressed along the ventral and dorsal nerve cords.

It localises to the nucleus. The protein localises to the nuclear pore complex. Its subcellular location is the cell projection. It is found in the axon. The protein resides in the synapse. In terms of biological role, functions as a component of the nuclear pore complex (NPC). NPC components, collectively referred to as nucleoporins (NUPs), can play the role of both NPC structural components and of docking or interaction partners for transiently associated nuclear transport factors. It is specifically important for nuclear mRNA export. Has a role in neuronal development, where it acts downstream of rpm-1 to control axon termination and synapse formation in anterior lateral microtubule (ALM) and posterior lateral microtubule (PLM) mechanosensory neurons. This Caenorhabditis elegans protein is mRNA export factor rae-1.